Consider the following 1063-residue polypeptide: Structural polyprotein (1063 aa).

A disordered region spans residues 23–131 (LRAELAAGAS…LGPPTNPFQA (109 aa)). Residues 30–69 (GASQLRRPRPPRQRDSSTSGDDSGRDSGGPRRRRGNRGRG) are human C1QBP/SF2P32-binding. Ser46 carries the phosphoserine; by host modification. Residues 59 to 69 (PRRRRGNRGRG) show a composition bias toward basic residues. Residues 70–87 (QRKDWSKAPPPPEERQES) show a composition bias toward basic and acidic residues. Pro residues predominate over residues 93–107 (VPKPPRAPPQPPQPP). Residues Cys153 and Cys197 are joined by a disulfide bond. The segment at 279 to 300 (GAPQVFLAGLLLAAVAVGTARA) is functions as E2 signal peptide. The Extracellular portion of the chain corresponds to 301–534 (GLQPRTDIAA…LWLATANALS (234 aa)). Residues 305–327 (RTDIAAPPAPPQAPRAHGKHYGH) are disordered. Residues Asn353, Asn371, Asn410, and Asn429 are each glycosylated (N-linked (GlcNAc...) asparagine; by host). A helical membrane pass occupies residues 535–555 (LDHALAAVVLLVPWVLIFMLC). The Cytoplasmic segment spans residues 556-582 (RRACRRRGAAAALTAVVLQGYNPPAYG). The interval 562–582 (RGAAAALTAVVLQGYNPPAYG) is functions as E1 signal peptide. Over 583–1028 (EEAFTYLCTA…QTWAEWAAAH (446 aa)) the chain is Extracellular. 8 disulfide bridges follow: Cys590/Cys595, Cys619/Cys824, Cys641/Cys653, Cys699/Cys712, Cys758/Cys767, Cys807/Cys817, Cys931/Cys934, and Cys950/Cys983. N-linked (GlcNAc...) asparagine; by host glycosylation is present at Asn658. Positions 670 and 671 each coordinate Ca(2+). Residues Asp718 and Thr719 each contribute to the Ca(2+) site. Residues Asn759 and Asn791 are each glycosylated (N-linked (GlcNAc...) asparagine; by host). Thr1011 and Thr1012 each carry an O-linked (GalNAc...) threonine; by host glycan. A helical transmembrane segment spans residues 1029 to 1049 (WWQLTLGAICALLLAGLLACC). At 1050-1063 (AKCLYHLRGAIAPR) the chain is on the extracellular side.

In terms of assembly, homodimer; further assembles into homooligomer. Interacts with human C1QBP. Interacts (via N-terminus) with protease/methyltransferase p150. As to quaternary structure, heterodimer with spike glycoprotein E2. Heterodimer with spike glycoprotein E1. In terms of processing, structural polyprotein: Specific enzymatic cleavages in vivo yield mature proteins. Two signal peptidase-mediated cleavages within the polyprotein produce the structural proteins capsid, E2, and E1. The E2 signal peptide remains attached to the C-terminus of the capsid protein after cleavage by the signal peptidase. Another signal peptide at E2 C-terminus directs E1 to the ER, with a similar mechanism. Contains three N-linked oligosaccharides. Post-translationally, capsid is phosphorylated on Ser-46 by host. This phosphorylation negatively regulates capsid protein RNA-binding activity. Dephosphorylated by human PP1A.

The protein resides in the virion. The protein localises to the host cytoplasm. It localises to the host mitochondrion. It is found in the virion membrane. Its subcellular location is the host Golgi apparatus membrane. Capsid protein interacts with genomic RNA and assembles into icosahedric core particles 65-70 nm in diameter. The resulting nucleocapsid eventually associates with the cytoplasmic domain of E2 at the cell membrane, leading to budding and formation of mature virions from host Golgi membranes. Phosphorylation negatively regulates RNA-binding activity, possibly delaying virion assembly during the viral replication phase. Capsid protein dimerizes and becomes disulfide-linked in the virion. Modulates genomic RNA replication. Modulates subgenomic RNA synthesis by interacting with human C1QBP/SF2P32. Induces both perinuclear clustering of mitochondria and the formation of electron-dense intermitochondrial plaques, both hallmarks of rubella virus infected cells. Induces apoptosis when expressed in transfected cells. Functionally, responsible for viral attachment to target host cell, by binding to the cell receptor. Its transport to the plasma membrane depends on interaction with E1 protein. The surface glycoproteins display an irregular helical organization and a pseudo-tetrameric inner nucleocapsid arrangement. Its function is as follows. Class II viral fusion protein. Fusion activity is inactive as long as E1 is bound to E2 in mature virion. After virus attachment to target cell and clathrin-mediated endocytosis, acidification of the endosome would induce dissociation of E1/E2 heterodimer and concomitant trimerization of the E1 subunits. This E1 homotrimer is fusion active, and promotes release of viral nucleocapsid in cytoplasm after endosome and viral membrane fusion. The cytoplasmic tail of spike glycoprotein E1 modulates virus release. The surface glycoproteins display an irregular helical organization and a pseudo-tetrameric inner nucleocapsid arrangement. This chain is Structural polyprotein, found in Homo sapiens (Human).